Reading from the N-terminus, the 176-residue chain is Ribosome rescue factor SmrB (176 aa).

A Smr domain is found at L93–D168.

This sequence belongs to the SmrB family. As to quaternary structure, associates with collided ribosomes, but not with correctly translating polysomes.

Functionally, acts as a ribosome collision sensor. Detects stalled/collided disomes (pairs of ribosomes where the leading ribosome is stalled and a second ribosome has collided with it) and endonucleolytically cleaves mRNA at the 5' boundary of the stalled ribosome. Stalled/collided disomes form a new interface (primarily via the 30S subunits) that binds SmrB. Cleaved mRNA becomes available for tmRNA ligation, leading to ribosomal subunit dissociation and rescue of stalled ribosomes. The chain is Ribosome rescue factor SmrB from Shewanella baltica (strain OS155 / ATCC BAA-1091).